A 329-amino-acid polypeptide reads, in one-letter code: T-cell acute lymphocytic leukemia protein 1 homolog (329 aa).

3 disordered regions span residues methionine 1–proline 28, glutamate 40–aspartate 78, and threonine 91–alanine 125. Serine 12 is subject to Phosphoserine. Over residues serine 58–alanine 70 the composition is skewed to gly residues. Residues proline 96–alanine 106 show a composition bias toward pro residues. Position 122 is a phosphoserine; by MAPK (serine 122). A Phosphoserine modification is found at serine 172. Residues valine 187–leucine 239 enclose the bHLH domain. Residues glutamate 247 to arginine 329 form a disordered region. The segment covering glycine 263 to isoleucine 273 has biased composition (gly residues). Residues proline 317–arginine 329 are compositionally biased toward low complexity.

In terms of assembly, efficient DNA binding requires dimerization with another bHLH protein. Forms heterodimers with TCF3. Binds to the LIM domain containing protein LMO2 and to DRG1. Can assemble in a complex with LDB1 and LMO2. Component of a TAL-1 complex composed at least of CBFA2T3, LDB1, TAL1 and TCF3. Interacts with SBNO2; this interaction inhibits TAL1 occupancy of the DCSTAMP promoter, leading to the activation of the DCSTAMP promoter by the transcription factor MITF. In terms of processing, phosphorylated on serine residues. Phosphorylation of Ser-122 by MAPK is strongly stimulated by hypoxia. Ubiquitinated; subsequent to hypoxia-dependent phosphorylation of Ser-122, ubiquitination targets the protein for rapid degradation via the ubiquitin system. This process may be characteristic for microvascular endothelial cells, since it could not be observed in large vessel endothelial cells. As to expression, erythroid and myeloid cells.

The protein localises to the nucleus. Implicated in the genesis of hemopoietic malignancies. It may play an important role in hemopoietic differentiation. Serves as a positive regulator of erythroid differentiation. In Mus musculus (Mouse), this protein is T-cell acute lymphocytic leukemia protein 1 homolog (Tal1).